We begin with the raw amino-acid sequence, 556 residues long: Phosphoglucomutase (556 aa).

The alpha-D-glucose 1,6-bisphosphate site is built by R22 and S114. The Phosphoserine intermediate role is filled by S114. Residues S114, D279, D281, and D283 each coordinate Mg(2+). Phosphoserine is present on S114. D283, R284, T347, E366, S368, and K379 together coordinate alpha-D-glucose 1,6-bisphosphate.

Belongs to the phosphohexose mutase family. In terms of assembly, monomer. The cofactor is Mg(2+).

It localises to the cytoplasm. The enzyme catalyses alpha-D-glucose 1-phosphate = alpha-D-glucose 6-phosphate. The catalysed reaction is O-phospho-L-seryl-[protein] + alpha-D-glucose 1-phosphate = alpha-D-glucose 1,6-bisphosphate + L-seryl-[protein]. It catalyses the reaction alpha-D-glucose 1,6-bisphosphate + L-seryl-[protein] = O-phospho-L-seryl-[protein] + alpha-D-glucose 6-phosphate. Catalyzes the reversible isomerization of alpha-D-glucose 1-phosphate to alpha-D-glucose 6-phosphate. The mechanism proceeds via the intermediate compound alpha-D-glucose 1,6-bisphosphate. Key enzyme in hexose metabolism. The reverse reaction is an essential step for biosynthesis because glucose 1-phosphate is the starting point for the synthesis of UDP-glucose, which acts as a precursor for the synthesis of oligosaccharides and trehalose. The chain is Phosphoglucomutase (pgmB) from Emericella nidulans (strain FGSC A4 / ATCC 38163 / CBS 112.46 / NRRL 194 / M139) (Aspergillus nidulans).